A 357-amino-acid chain; its full sequence is Alanine racemase (357 aa).

Catalysis depends on lysine 33, which acts as the Proton acceptor; specific for D-alanine. At lysine 33 the chain carries N6-(pyridoxal phosphate)lysine. Arginine 129 is a substrate binding site. The active-site Proton acceptor; specific for L-alanine is tyrosine 253. Methionine 301 contacts substrate.

The protein belongs to the alanine racemase family. Pyridoxal 5'-phosphate is required as a cofactor.

It carries out the reaction L-alanine = D-alanine. The protein operates within amino-acid biosynthesis; D-alanine biosynthesis; D-alanine from L-alanine: step 1/1. Catalyzes the interconversion of L-alanine and D-alanine. May also act on other amino acids. The chain is Alanine racemase (alr) from Pseudomonas syringae pv. syringae (strain B728a).